A 191-amino-acid chain; its full sequence is Putative inactive glutathione hydrolase 4 (191 aa).

Thr54 functions as the Nucleophile in the catalytic mechanism. L-glutamate is bound by residues Thr72, Asn74, Glu93, Asp96, 126–127, and 147–148; these read SS and GG.

This sequence belongs to the gamma-glutamyltransferase family. Expressed at low levels in embryo, roots and leaves. In mature plants, expression is restricted to vascular tissues of roots, leaves, flowers and siliques.

The protein is Putative inactive glutathione hydrolase 4 (GGT4) of Arabidopsis thaliana (Mouse-ear cress).